The following is a 159-amino-acid chain: Small ribosomal subunit protein uS9 (159 aa).

It belongs to the universal ribosomal protein uS9 family.

The chain is Small ribosomal subunit protein uS9 from Rickettsia massiliae (strain Mtu5).